The sequence spans 207 residues: Large ribosomal subunit protein uL4 (207 aa).

The disordered stretch occupies residues 62-85 (KKPFKQKGTGQARQGCRRAPQYPG).

It belongs to the universal ribosomal protein uL4 family. Part of the 50S ribosomal subunit.

Functionally, one of the primary rRNA binding proteins, this protein initially binds near the 5'-end of the 23S rRNA. It is important during the early stages of 50S assembly. It makes multiple contacts with different domains of the 23S rRNA in the assembled 50S subunit and ribosome. In terms of biological role, forms part of the polypeptide exit tunnel. This chain is Large ribosomal subunit protein uL4, found in Geobacter sp. (strain M21).